The following is a 387-amino-acid chain: Zinc finger transcription factor YY1 (387 aa).

C2H2-type zinc fingers lie at residues 79-103 (FLCS…SHIH), 108-132 (YVCD…YLIH), 138-162 (YICT…MKTH), 168-193 (HICP…AAYH), and 230-255 (YACP…KREH). Positions 201–290 (TPKYTPPAEK…DDGSDQDVYR (90 aa)) are MED18-binding. The segment at 258-387 (HLQEENADTP…DDDEETEYED (130 aa)) is disordered. Ser284 bears the Phosphoserine mark. Basic residues predominate over residues 291–305 (KHASNGKGQTHKQQS). The Nuclear localization signal motif lies at 319-326 (GKKGSTSS). Residues 339–367 (AKETFEEVEREEEEDSEETEEDRDNVEDG) are a coiled coil. 2 stretches are compositionally biased toward acidic residues: residues 344 to 363 (EEVE…DRDN) and 373 to 387 (NNED…EYED).

As to quaternary structure, interacts with MED18 to suppress disease susceptibility via the repression of genes glutaredoxins GRX480, GRXS13 and thioredoxin TRX-h5. As to expression, mostly expressed in flowers, to a lower extent in seedlings, stems and leaves, and, at low levels, in roots and senescent leaves.

It localises to the nucleus. In terms of biological role, dual-function transcription factor with both repression and activation activities. Binds to 5'-CCATATT-3' motif in target gene promoters (e.g. ABR1). Also binds to G-rich DNA motif 5'-GGGGGCAGTGG-3'. Regulates the expression of genes involved in diverse cellular pathways, including glucose metabolism, photosynthesis, phototropism and stress response (e.g. salt, drought and osmotic stress). Regulates plant immunity, especially during necrotrophic fungal infection (e.g. B.cinerea). Binds to ABR1 promoter and promotes its expression, thus negatively regulating the abscisic acid (ABA) signaling pathway. Represses ABA- and salt-responsive genes expression. The polypeptide is Zinc finger transcription factor YY1 (Arabidopsis thaliana (Mouse-ear cress)).